A 38-amino-acid chain; its full sequence is Large ribosomal subunit protein bL36 (38 aa).

The protein belongs to the bacterial ribosomal protein bL36 family.

This chain is Large ribosomal subunit protein bL36, found in Streptococcus agalactiae serotype III (strain NEM316).